Consider the following 87-residue polypeptide: Small ribosomal subunit protein uS15 (87 aa).

The protein belongs to the universal ribosomal protein uS15 family. As to quaternary structure, part of the 30S ribosomal subunit. Forms a bridge to the 50S subunit in the 70S ribosome, contacting the 23S rRNA.

Its function is as follows. One of the primary rRNA binding proteins, it binds directly to 16S rRNA where it helps nucleate assembly of the platform of the 30S subunit by binding and bridging several RNA helices of the 16S rRNA. Functionally, forms an intersubunit bridge (bridge B4) with the 23S rRNA of the 50S subunit in the ribosome. In Clostridium perfringens (strain ATCC 13124 / DSM 756 / JCM 1290 / NCIMB 6125 / NCTC 8237 / Type A), this protein is Small ribosomal subunit protein uS15.